A 342-amino-acid polypeptide reads, in one-letter code: S-adenosylmethionine:tRNA ribosyltransferase-isomerase (342 aa).

This sequence belongs to the QueA family. As to quaternary structure, monomer.

It localises to the cytoplasm. The catalysed reaction is 7-aminomethyl-7-carbaguanosine(34) in tRNA + S-adenosyl-L-methionine = epoxyqueuosine(34) in tRNA + adenine + L-methionine + 2 H(+). Its pathway is tRNA modification; tRNA-queuosine biosynthesis. Transfers and isomerizes the ribose moiety from AdoMet to the 7-aminomethyl group of 7-deazaguanine (preQ1-tRNA) to give epoxyqueuosine (oQ-tRNA). The protein is S-adenosylmethionine:tRNA ribosyltransferase-isomerase of Streptococcus agalactiae serotype V (strain ATCC BAA-611 / 2603 V/R).